The chain runs to 1515 residues: Lysophospholipase nte1 (1515 aa).

At 1–59 (MESLSNLGNAMSSVLSETTSTTATAILADPTEALSSVVALASDAVSKATSDVVPEHTPT) the chain is on the cytoplasmic side. A helical membrane pass occupies residues 60 to 80 (SWFTIILWLLHRISSVLYFVI). At 81–102 (KLTTITTPTFLFNIFSTSLTVT) the chain is on the lumenal side. A helical membrane pass occupies residues 103-123 (MNATTLVLIMLFMMAGVTWVV). At 124–1515 (RYRYLNMYSR…RTMAPRRASI (1392 aa)) the chain is on the cytoplasmic side. Disordered stretches follow at residues 278–303 (MHDT…GYPM), 519–580 (VTAT…TPRN), and 617–639 (VNPD…SRGG). Composition is skewed to polar residues over residues 543–554 (LTNTQQLKSGPA) and 566–579 (PRPQ…STPR). A nucleoside 3',5'-cyclic phosphate contacts are provided by residues 670–789 (SPVP…LAGY) and 835–955 (RLTE…IAAR). A PNPLA domain is found at 1212–1376 (LVLGGGGARG…IDNLTVSRMK (165 aa)). The GXGXXG signature appears at 1216-1221 (GGGARG). The short motif at 1243–1247 (GTSIG) is the GXSXG element. Residue Ser1245 is the Nucleophile of the active site. The active-site Proton acceptor is the Asp1363. Positions 1363 to 1365 (DGG) match the DGA/G motif.

Belongs to the NTE family.

It is found in the endoplasmic reticulum membrane. It catalyses the reaction a 1-acyl-sn-glycero-3-phosphocholine + H2O = sn-glycerol 3-phosphocholine + a fatty acid + H(+). Inhibited by organophosphorus esters. Functionally, intracellular phospholipase B that catalyzes the double deacylation of phosphatidylcholine (PC) to glycerophosphocholine (GroPCho). Plays an important role in membrane lipid homeostasis. Responsible for the rapid PC turnover in response to inositol, elevated temperatures, or when choline is present in the growth medium. The polypeptide is Lysophospholipase nte1 (nte1) (Neurospora crassa (strain ATCC 24698 / 74-OR23-1A / CBS 708.71 / DSM 1257 / FGSC 987)).